We begin with the raw amino-acid sequence, 104 residues long: Large ribosomal subunit protein uL24 (104 aa).

It belongs to the universal ribosomal protein uL24 family. Part of the 50S ribosomal subunit.

Its function is as follows. One of two assembly initiator proteins, it binds directly to the 5'-end of the 23S rRNA, where it nucleates assembly of the 50S subunit. In terms of biological role, one of the proteins that surrounds the polypeptide exit tunnel on the outside of the subunit. The polypeptide is Large ribosomal subunit protein uL24 (Methylorubrum populi (strain ATCC BAA-705 / NCIMB 13946 / BJ001) (Methylobacterium populi)).